The sequence spans 259 residues: 5'-nucleotidase SurE (259 aa).

A divalent metal cation-binding residues include Asp-11, Asp-12, Ser-42, and Asn-99.

The protein belongs to the SurE nucleotidase family. A divalent metal cation serves as cofactor.

It is found in the cytoplasm. The enzyme catalyses a ribonucleoside 5'-phosphate + H2O = a ribonucleoside + phosphate. Nucleotidase that shows phosphatase activity on nucleoside 5'-monophosphates. The polypeptide is 5'-nucleotidase SurE (Cytophaga hutchinsonii (strain ATCC 33406 / DSM 1761 / CIP 103989 / NBRC 15051 / NCIMB 9469 / D465)).